A 173-amino-acid chain; its full sequence is Co-chaperone protein HscB homolog (173 aa).

In terms of domain architecture, J spans 5–77 (CHFAQFDLQP…PRRALYLLTL (73 aa)).

This sequence belongs to the HscB family. Interacts with HscA and stimulates its ATPase activity.

Co-chaperone involved in the maturation of iron-sulfur cluster-containing proteins. Seems to help targeting proteins to be folded toward HscA. In Pseudomonas paraeruginosa (strain DSM 24068 / PA7) (Pseudomonas aeruginosa (strain PA7)), this protein is Co-chaperone protein HscB homolog.